The chain runs to 200 residues: 3-isopropylmalate dehydratase small subunit (200 aa).

It belongs to the LeuD family. LeuD type 1 subfamily. Heterodimer of LeuC and LeuD.

It carries out the reaction (2R,3S)-3-isopropylmalate = (2S)-2-isopropylmalate. The protein operates within amino-acid biosynthesis; L-leucine biosynthesis; L-leucine from 3-methyl-2-oxobutanoate: step 2/4. Functionally, catalyzes the isomerization between 2-isopropylmalate and 3-isopropylmalate, via the formation of 2-isopropylmaleate. The chain is 3-isopropylmalate dehydratase small subunit from Aliivibrio fischeri (strain MJ11) (Vibrio fischeri).